We begin with the raw amino-acid sequence, 848 residues long: DNA mismatch repair protein MutS (848 aa).

Position 605–612 (605–612 (GPNMAGKS)) interacts with ATP.

Belongs to the DNA mismatch repair MutS family.

Functionally, this protein is involved in the repair of mismatches in DNA. It is possible that it carries out the mismatch recognition step. This protein has a weak ATPase activity. The polypeptide is DNA mismatch repair protein MutS (Leptospira borgpetersenii serovar Hardjo-bovis (strain JB197)).